Consider the following 22-residue polypeptide: Phospholipase A2 (22 aa).

It belongs to the phospholipase A2 family. Group II subfamily. It depends on Ca(2+) as a cofactor. Post-translationally, seven disulfide bonds are present. In terms of tissue distribution, expressed by the venom gland.

The protein resides in the secreted. It carries out the reaction a 1,2-diacyl-sn-glycero-3-phosphocholine + H2O = a 1-acyl-sn-glycero-3-phosphocholine + a fatty acid + H(+). Its function is as follows. Snake venom phospholipase A2 (PLA2) that inhibits neuromuscular transmission by blocking acetylcholine release from the nerve termini. PLA2 catalyzes the calcium-dependent hydrolysis of the 2-acyl groups in 3-sn-phosphoglycerides. This is Phospholipase A2 from Daboia siamensis (Eastern Russel's viper).